We begin with the raw amino-acid sequence, 237 residues long: Dihydroceramide fatty acyl 2-hydroxylase FAH1 (237 aa).

Transmembrane regions (helical) follow at residues 50–70 and 80–100; these read LTLT…VWCI and LPEI…FEYV. Residues H102, H107, H123, H126, and H127 each coordinate Zn(2+). A run of 2 helical transmembrane segments spans residues 137–157 and 164–184; these read VFPP…AKAI and PALF…HYYL. Residues H181, H185, H201, H204, and H205 each coordinate Zn(2+).

Belongs to the sterol desaturase family. As to quaternary structure, interacts with CYTB5-A, CYTB5-B, CYTB5-C and CYTB5-D. Interacts indirectly with BI-1 via CYTB5-D. It depends on Zn(2+) as a cofactor. Expressed in leaves, roots, flowers and seeds.

The protein localises to the endoplasmic reticulum membrane. It carries out the reaction an N-(1,2-saturated acyl)sphinganine + 2 Fe(II)-[cytochrome b5] + O2 + 2 H(+) = an N-[(2'R)-hydroxyacyl]sphinganine + 2 Fe(III)-[cytochrome b5] + H2O. Fatty acid 2-hydroxylase involved in the alpha-hydroxylation of sphingolipid-associated very long-chain fatty acids (VLCFA). Probably involved in the resistance response to oxidative stress. This is Dihydroceramide fatty acyl 2-hydroxylase FAH1 from Arabidopsis thaliana (Mouse-ear cress).